We begin with the raw amino-acid sequence, 160 residues long: CXXC motif containing zinc binding protein (160 aa).

Zn(2+) contacts are provided by Cys33, Cys36, Cys67, and Cys70. Position 75 is a phosphoserine (Ser75).

Belongs to the UPF0587 family. In terms of assembly, monomer.

The sequence is that of CXXC motif containing zinc binding protein from Rattus norvegicus (Rat).